A 398-amino-acid chain; its full sequence is uncharacterized protein (398 aa).

Belongs to the glycosyltransferase 2 family.

This is an uncharacterized protein from Escherichia coli (strain K12).